The primary structure comprises 206 residues: Small ribosomal subunit protein uS4 (206 aa).

The S4 RNA-binding domain maps to 96–156; the sequence is GRLDNVVYRM…EKSKKQARIK (61 aa).

Belongs to the universal ribosomal protein uS4 family. In terms of assembly, part of the 30S ribosomal subunit. Contacts protein S5. The interaction surface between S4 and S5 is involved in control of translational fidelity.

One of the primary rRNA binding proteins, it binds directly to 16S rRNA where it nucleates assembly of the body of the 30S subunit. Its function is as follows. With S5 and S12 plays an important role in translational accuracy. This is Small ribosomal subunit protein uS4 from Mannheimia succiniciproducens (strain KCTC 0769BP / MBEL55E).